The sequence spans 306 residues: Non-specific ribonucleoside hydrolase RihC (306 aa).

Histidine 235 is an active-site residue.

It belongs to the IUNH family. RihC subfamily.

Its function is as follows. Hydrolyzes both purine and pyrimidine ribonucleosides with a broad-substrate specificity. The chain is Non-specific ribonucleoside hydrolase RihC from Salmonella paratyphi B (strain ATCC BAA-1250 / SPB7).